A 419-amino-acid chain; its full sequence is UDP-N-acetylglucosamine 1-carboxyvinyltransferase (419 aa).

Residue 22-23 (KN) coordinates phosphoenolpyruvate. Arginine 93 is a UDP-N-acetyl-alpha-D-glucosamine binding site. Cysteine 117 acts as the Proton donor in catalysis. A 2-(S-cysteinyl)pyruvic acid O-phosphothioketal modification is found at cysteine 117. Residues aspartate 307 and isoleucine 329 each coordinate UDP-N-acetyl-alpha-D-glucosamine.

It belongs to the EPSP synthase family. MurA subfamily.

It localises to the cytoplasm. It carries out the reaction phosphoenolpyruvate + UDP-N-acetyl-alpha-D-glucosamine = UDP-N-acetyl-3-O-(1-carboxyvinyl)-alpha-D-glucosamine + phosphate. Its pathway is cell wall biogenesis; peptidoglycan biosynthesis. Cell wall formation. Adds enolpyruvyl to UDP-N-acetylglucosamine. The sequence is that of UDP-N-acetylglucosamine 1-carboxyvinyltransferase from Shewanella piezotolerans (strain WP3 / JCM 13877).